Reading from the N-terminus, the 821-residue chain is Serine/threonine-protein kinase CTR1 (821 aa).

Disordered regions lie at residues 1 to 76 (MEMP…LNNQ) and 481 to 502 (NPGGENDALAENGGGSLPPSAN). Low complexity predominate over residues 14-25 (SQFSDDQVSVSV). Residues 35 to 49 (SLSSENRSNHNSGNT) are compositionally biased toward polar residues. In terms of domain architecture, Protein kinase spans 551–809 (LNIKEKIGAG…TIMDLLRPLI (259 aa)). ATP-binding positions include 557–565 (IGAGSFGTV) and lysine 578. Aspartate 676 acts as the Proton acceptor in catalysis.

Belongs to the protein kinase superfamily. TKL Ser/Thr protein kinase family. RAF subfamily. In terms of assembly, interacts with EIN2 (via C-terminus). As to expression, expressed in both seedlings and adult plants.

The catalysed reaction is L-seryl-[protein] + ATP = O-phospho-L-seryl-[protein] + ADP + H(+). It catalyses the reaction L-threonyl-[protein] + ATP = O-phospho-L-threonyl-[protein] + ADP + H(+). With respect to regulation, kinase activity is inhibited by C24:1-ceramide during hypoxia (e.g. submergences). Acts as a negative regulator in the ethylene response pathway. Phosphorylates the cytosolic C-terminal domain of EIN2, preventing the signaling in the absence of ethylene. Interacts with C24:1-ceramide upon hypoxic conditions (e.g. submergences) to in turn regulate EIN2 endoplasmic reticulum (ER)-to-nucleus translocation and EIN3 stabilization. This is Serine/threonine-protein kinase CTR1 from Arabidopsis thaliana (Mouse-ear cress).